The sequence spans 130 residues: Small ribosomal subunit protein eS8 (130 aa).

It belongs to the eukaryotic ribosomal protein eS8 family. Part of the 30S ribosomal subunit.

This Thermococcus gammatolerans (strain DSM 15229 / JCM 11827 / EJ3) protein is Small ribosomal subunit protein eS8.